A 293-amino-acid chain; its full sequence is Capsid protein (293 aa).

Residues 1-39 (MPPKPDPSSSGEAPQAMQPAPPPRAEGHMYAQPEGPGQN) form a disordered region.

The protein belongs to the potexviruses coat protein family.

It localises to the virion. Functionally, required for genome encapsidation. Forms ribonucleoprotein complexes along with TGB1 helicase and viral RNA. The protein is Capsid protein of Solanum tuberosum (Potato).